The primary structure comprises 212 residues: NADH dehydrogenase [ubiquinone] iron-sulfur protein 8, mitochondrial (212 aa).

A mitochondrion-targeting transit peptide spans 1-36; that stretch reads MRCLTMPMLLRALAQAQAARAGHASVRGLHSSAVAA. 2 consecutive 4Fe-4S ferredoxin-type domains span residues 104-133 and 143-172; these read RRYP…IEAE and TRYD…EGPN. The [4Fe-4S] cluster site is built by cysteine 113, cysteine 116, cysteine 119, cysteine 123, cysteine 152, cysteine 155, cysteine 158, and cysteine 162.

This sequence belongs to the complex I 23 kDa subunit family. As to quaternary structure, core subunit of respiratory chain NADH dehydrogenase (Complex I) which is composed of 45 different subunits. This is a component of the iron-sulfur (IP) fragment of the enzyme. Interacts with RAB5IF. Requires [4Fe-4S] cluster as cofactor.

It is found in the mitochondrion inner membrane. The catalysed reaction is a ubiquinone + NADH + 5 H(+)(in) = a ubiquinol + NAD(+) + 4 H(+)(out). Core subunit of the mitochondrial membrane respiratory chain NADH dehydrogenase (Complex I) which catalyzes electron transfer from NADH through the respiratory chain, using ubiquinone as an electron acceptor. Essential for the catalytic activity and assembly of complex I. The chain is NADH dehydrogenase [ubiquinone] iron-sulfur protein 8, mitochondrial (NDUFS8) from Bos taurus (Bovine).